Here is a 381-residue protein sequence, read N- to C-terminus: Pectin lyase 1 (381 aa).

An N-terminal signal peptide occupies residues 1–20 (MKYASFIAAAAAALASAVSA). 2 disulfide bridges follow: Cys-83/Cys-102 and Cys-92/Cys-227. An N-linked (GlcNAc...) asparagine glycan is attached at Asn-130. Arg-257 is an active-site residue. A disulfide bond links Cys-324 and Cys-332.

Belongs to the polysaccharide lyase 1 family.

Its subcellular location is the secreted. The catalysed reaction is Eliminative cleavage of (1-&gt;4)-alpha-D-galacturonan methyl ester to give oligosaccharides with 4-deoxy-6-O-methyl-alpha-D-galact-4-enuronosyl groups at their non-reducing ends.. Its function is as follows. Pectinolytic enzymes consist of four classes of enzymes: pectin lyase, polygalacturonase, pectin methylesterase and rhamnogalacturonase. Among pectinolytic enzymes, pectin lyase is the most important in depolymerization of pectin, since it cleaves internal glycosidic bonds of highly methylated pectins. In Aspergillus oryzae (strain ATCC 42149 / RIB 40) (Yellow koji mold), this protein is Pectin lyase 1 (pel1).